A 427-amino-acid polypeptide reads, in one-letter code: Glutamate-1-semialdehyde 2,1-aminomutase (427 aa).

At Lys267 the chain carries N6-(pyridoxal phosphate)lysine.

It belongs to the class-III pyridoxal-phosphate-dependent aminotransferase family. HemL subfamily. As to quaternary structure, homodimer. Pyridoxal 5'-phosphate serves as cofactor.

The protein resides in the cytoplasm. The catalysed reaction is (S)-4-amino-5-oxopentanoate = 5-aminolevulinate. It functions in the pathway porphyrin-containing compound metabolism; protoporphyrin-IX biosynthesis; 5-aminolevulinate from L-glutamyl-tRNA(Glu): step 2/2. This is Glutamate-1-semialdehyde 2,1-aminomutase from Syntrophotalea carbinolica (strain DSM 2380 / NBRC 103641 / GraBd1) (Pelobacter carbinolicus).